The following is a 305-amino-acid chain: Lysosomal thioesterase PPT2 (305 aa).

Residues 1–32 (MLGLPERRLPSAEFLLLLPFLLLLLLLLPAAP) form the signal peptide. Intrachain disulfides connect C112–C120 and C168–C179. The Nucleophile role is filled by S114. N193 carries an N-linked (GlcNAc...) asparagine glycan. Catalysis depends on residues D231 and H286. The cysteines at positions 279 and 299 are disulfide-linked.

The protein belongs to the palmitoyl-protein thioesterase family.

Its subcellular location is the lysosome. It carries out the reaction hexadecanoyl-CoA + H2O = hexadecanoate + CoA + H(+). The catalysed reaction is S-hexadecanoyl-N-acetylcysteamine + H2O = N-acetylcysteamine + hexadecanoate + H(+). Catalyzes the cleavage of thioester bonds from S-palmitoyl-CoA or S-palmitoyl-N-acetylcysteamine (unbranched structures) but does not have activity against palmitoylcysteine or palmitoylated proteins, branched structures or bulky head groups. Conversely, hydrolyzes both long and short chain fatty acyl-CoA substrate. The protein is Lysosomal thioesterase PPT2 (PPT2) of Bos taurus (Bovine).